The following is a 757-amino-acid chain: 5-methyltetrahydropteroyltriglutamate--homocysteine methyltransferase (757 aa).

K18 and N116 together coordinate 5-methyltetrahydropteroyltri-L-glutamate. Residue 437-439 (IGS) coordinates L-homocysteine. Residues 437–439 (IGS) and E490 each bind L-methionine. 5-methyltetrahydropteroyltri-L-glutamate is bound by residues 521 to 522 (RC) and W567. D605 contributes to the L-homocysteine binding site. D605 is a binding site for L-methionine. H647, C649, H658, D662, and E671 together coordinate Zn(2+). Catalysis depends on H701, which acts as the Proton donor. C733 serves as a coordination point for Zn(2+).

The protein belongs to the vitamin-B12 independent methionine synthase family. Zn(2+) serves as cofactor. As to expression, expressed in pollen (at protein level).

The catalysed reaction is 5-methyltetrahydropteroyltri-L-glutamate + L-homocysteine = tetrahydropteroyltri-L-glutamate + L-methionine. The protein operates within amino-acid biosynthesis; L-methionine biosynthesis via de novo pathway; L-methionine from L-homocysteine (MetE route): step 1/1. Its function is as follows. Catalyzes the transfer of a methyl group from 5-methyltetrahydrofolate to homocysteine resulting in methionine formation. This chain is 5-methyltetrahydropteroyltriglutamate--homocysteine methyltransferase, found in Kali turgidum (Prickly saltwort).